Reading from the N-terminus, the 1044-residue chain is Ribonucleoside-diphosphate reductase subunit alpha (1044 aa).

3 consecutive ATP-cone domains span residues 9–111, 118–217, and 235–325; these read YTIV…KAER, IAII…ARAR, and YVVQ…ETLG. Substrate contacts are provided by residues Thr440, 455 to 456, Gly484, 668 to 672, and 855 to 859; these read SC, NLCTE, and PTATI. Cysteines 456 and 685 form a disulfide. The active-site Proton acceptor is the Asn668. Cys670 serves as the catalytic Cysteine radical intermediate. Catalysis depends on Glu672, which acts as the Proton acceptor.

This sequence belongs to the ribonucleoside diphosphate reductase large chain family. In terms of assembly, tetramer of two alpha and two beta subunits.

It carries out the reaction a 2'-deoxyribonucleoside 5'-diphosphate + [thioredoxin]-disulfide + H2O = a ribonucleoside 5'-diphosphate + [thioredoxin]-dithiol. Under complex allosteric control mediated by deoxynucleoside triphosphates and ATP binding. The type of nucleotide bound at the specificity site determines substrate preference. It seems probable that ATP makes the enzyme reduce CDP and UDP, dGTP favors ADP reduction and dTTP favors GDP reduction. Functionally, provides the precursors necessary for DNA synthesis. Catalyzes the biosynthesis of deoxyribonucleotides from the corresponding ribonucleotides. The polypeptide is Ribonucleoside-diphosphate reductase subunit alpha (nrdA) (Chlamydia pneumoniae (Chlamydophila pneumoniae)).